The primary structure comprises 33 residues: uncharacterized protein (33 aa).

The Cytoplasmic portion of the chain corresponds to 1–12 (MKENKVQQISHK). A helical membrane pass occupies residues 13–33 (LINIVVFVAIVEYAYLFLHFY).

It is found in the cell inner membrane. This is an uncharacterized protein from Escherichia coli (strain K12).